A 481-amino-acid chain; its full sequence is 3-isopropylmalate dehydratase large subunit (481 aa).

[4Fe-4S] cluster is bound by residues cysteine 363, cysteine 423, and cysteine 426. Residues 434–465 form a disordered region; sequence LRPGQRAASTSNRNFEGRQGRGGRTHLVSPPV.

It belongs to the aconitase/IPM isomerase family. LeuC type 1 subfamily. As to quaternary structure, heterodimer of LeuC and LeuD. It depends on [4Fe-4S] cluster as a cofactor.

It carries out the reaction (2R,3S)-3-isopropylmalate = (2S)-2-isopropylmalate. It functions in the pathway amino-acid biosynthesis; L-leucine biosynthesis; L-leucine from 3-methyl-2-oxobutanoate: step 2/4. Catalyzes the isomerization between 2-isopropylmalate and 3-isopropylmalate, via the formation of 2-isopropylmaleate. The chain is 3-isopropylmalate dehydratase large subunit from Salinispora tropica (strain ATCC BAA-916 / DSM 44818 / JCM 13857 / NBRC 105044 / CNB-440).